Here is a 551-residue protein sequence, read N- to C-terminus: Intestinal-type alkaline phosphatase 2 (551 aa).

Positions 1–19 (MQGAWVLLLLGFRLQLSLS) are cleaved as a signal peptide. Asp-61 contacts Mg(2+). Residues Asp-61 and Ser-111 each contribute to the Zn(2+) site. Catalysis depends on Ser-111, which acts as the Phosphoserine intermediate. A disulfide bridge links Cys-140 with Cys-202. The N-linked (GlcNAc...) asparagine glycan is linked to Asn-141. Ser-174 contacts Mg(2+). Ca(2+) is bound at residue Glu-235. Asn-241 carries N-linked (GlcNAc...) asparagine glycosylation. Ca(2+)-binding residues include Phe-288, Glu-289, and Asp-304. Residue Glu-330 participates in Mg(2+) binding. The Zn(2+) site is built by Asp-335, His-339, Asp-376, and His-377. N-linked (GlcNAc...) asparagine glycosylation is present at Asn-426. Cys-485 and Cys-492 are disulfide-bonded. The interval 496 to 537 (PPADENRPTTPVQNSTTTTTTTTTTTTTTTTTRVQNSASSLG) is disordered. The N-linked (GlcNAc...) asparagine glycan is linked to Asn-509. The span at 511–527 (TTTTTTTTTTTTTTTTT) shows a compositional bias: low complexity. Residues 528–537 (RVQNSASSLG) show a composition bias toward polar residues. Asn-531 carries the GPI-anchor amidated asparagine lipid modification. Residues 532-551 (SASSLGPATAPLAWHYWPRR) constitute a propeptide, removed in mature form.

The protein belongs to the alkaline phosphatase family. Homodimer. Requires Mg(2+) as cofactor. Zn(2+) serves as cofactor. It depends on Ca(2+) as a cofactor.

It is found in the cell membrane. The catalysed reaction is a phosphate monoester + H2O = an alcohol + phosphate. Functionally, alkaline phosphatase that can hydrolyze various phosphate compounds. This Rattus norvegicus (Rat) protein is Intestinal-type alkaline phosphatase 2.